A 238-amino-acid polypeptide reads, in one-letter code: MFMDYKYFFITIILISIFCGCYEKSYSFVEYNRHYELNEPNNTKNPNYDQNIFLNHDLPKTYPKMYKFPKNYYELSDKMFPDVKKRDLDTLSYILKTIKLPAYKKNYYDCSEASCQLEWILEGYGFKTYLVYGILDTYGNSGSHMWVAVQLDNGKMVLVESTYLCENYYCPDYAIIYKNYNLNNIVIVRDMKYIPKFYADTPDMFLIPHNNRRFLITQLDWWNHPKNAEIKKEMFNLK.

This is an uncharacterized protein from Methanocaldococcus jannaschii (strain ATCC 43067 / DSM 2661 / JAL-1 / JCM 10045 / NBRC 100440) (Methanococcus jannaschii).